Consider the following 256-residue polypeptide: Putative transcription factor 001R (256 aa).

In terms of biological role, transcription activation. This is Putative transcription factor 001R from Frog virus 3 (isolate Goorha) (FV-3).